Consider the following 443-residue polypeptide: Ribulose bisphosphate carboxylase large chain (443 aa).

Substrate contacts are provided by Asn-89 and Thr-139. Lys-141 functions as the Proton acceptor in the catalytic mechanism. Lys-143 provides a ligand contact to substrate. Residues Lys-167, Asp-169, and Glu-170 each contribute to the Mg(2+) site. Lys-167 carries the post-translational modification N6-carboxylysine. His-260 (proton acceptor) is an active-site residue. Substrate contacts are provided by Arg-261, His-293, and Ser-345.

It belongs to the RuBisCO large chain family. Type I subfamily. As to quaternary structure, heterohexadecamer of 8 large chains and 8 small chains; disulfide-linked. The disulfide link is formed within the large subunit homodimers. The cofactor is Mg(2+). In terms of processing, the disulfide bond which can form in the large chain dimeric partners within the hexadecamer appears to be associated with oxidative stress and protein turnover.

It is found in the plastid. The protein resides in the chloroplast. The catalysed reaction is 2 (2R)-3-phosphoglycerate + 2 H(+) = D-ribulose 1,5-bisphosphate + CO2 + H2O. It catalyses the reaction D-ribulose 1,5-bisphosphate + O2 = 2-phosphoglycolate + (2R)-3-phosphoglycerate + 2 H(+). Functionally, ruBisCO catalyzes two reactions: the carboxylation of D-ribulose 1,5-bisphosphate, the primary event in carbon dioxide fixation, as well as the oxidative fragmentation of the pentose substrate in the photorespiration process. Both reactions occur simultaneously and in competition at the same active site. The chain is Ribulose bisphosphate carboxylase large chain from Antirrhinum majus (Garden snapdragon).